The primary structure comprises 432 residues: Adenylosuccinate synthetase (432 aa).

GTP-binding positions include 13-19 (GDEGKGK) and 41-43 (GHT). D14 functions as the Proton acceptor in the catalytic mechanism. Residues D14 and G41 each coordinate Mg(2+). IMP-binding positions include 14 to 17 (DEGK), 39 to 42 (NAGH), T130, R144, Q225, T240, and R306. H42 acts as the Proton donor in catalysis. Position 302-308 (302-308 (TVTGRAR)) interacts with substrate. GTP contacts are provided by residues R308, 334–336 (KLD), and 416–418 (STG).

The protein belongs to the adenylosuccinate synthetase family. In terms of assembly, homodimer. It depends on Mg(2+) as a cofactor.

It is found in the cytoplasm. It carries out the reaction IMP + L-aspartate + GTP = N(6)-(1,2-dicarboxyethyl)-AMP + GDP + phosphate + 2 H(+). The protein operates within purine metabolism; AMP biosynthesis via de novo pathway; AMP from IMP: step 1/2. Plays an important role in the de novo pathway of purine nucleotide biosynthesis. Catalyzes the first committed step in the biosynthesis of AMP from IMP. This Herminiimonas arsenicoxydans protein is Adenylosuccinate synthetase.